A 133-amino-acid chain; its full sequence is Profilin (133 aa).

This sequence belongs to the profilin family.

Functionally, more likely to influence phosphoinositide metabolism than actin assembly. The chain is Profilin from Vaccinia virus (strain Tian Tan) (VACV).